A 121-amino-acid chain; its full sequence is MTCGLVRIRLARFGRKNSPVYNIVVANSRKARDAKPIEVLGTYVPVPSPVTKRELKRGVVPIKDVKLDFDRTKYWIGVGAQPSETVTKLLRKAGILNDAWATSKNSNVNRKVVFERMETLE.

It belongs to the bacterial ribosomal protein bS16 family. As to quaternary structure, component of the mitochondrial small ribosomal subunit (mt-SSU). Mature yeast 74S mitochondrial ribosomes consist of a small (37S) and a large (54S) subunit. The 37S small subunit contains a 15S ribosomal RNA (15S mt-rRNA) and 34 different proteins. The 54S large subunit contains a 21S rRNA (21S mt-rRNA) and 46 different proteins.

It is found in the mitochondrion. Functionally, component of the mitochondrial ribosome (mitoribosome), a dedicated translation machinery responsible for the synthesis of mitochondrial genome-encoded proteins, including at least some of the essential transmembrane subunits of the mitochondrial respiratory chain. The mitoribosomes are attached to the mitochondrial inner membrane and translation products are cotranslationally integrated into the membrane. In Saccharomyces cerevisiae (strain ATCC 204508 / S288c) (Baker's yeast), this protein is Small ribosomal subunit protein bS16m (MRPS16).